We begin with the raw amino-acid sequence, 156 residues long: Small ribosomal subunit protein uS7 (156 aa).

It belongs to the universal ribosomal protein uS7 family. As to quaternary structure, part of the 30S ribosomal subunit. Contacts proteins S9 and S11.

Its function is as follows. One of the primary rRNA binding proteins, it binds directly to 16S rRNA where it nucleates assembly of the head domain of the 30S subunit. Is located at the subunit interface close to the decoding center, probably blocks exit of the E-site tRNA. The sequence is that of Small ribosomal subunit protein uS7 from Nitrobacter winogradskyi (strain ATCC 25391 / DSM 10237 / CIP 104748 / NCIMB 11846 / Nb-255).